A 459-amino-acid chain; its full sequence is Replication initiator protein (459 aa).

Essential for pSAM2 replication. In Streptomyces ambofaciens, this protein is Replication initiator protein (repSA).